Consider the following 143-residue polypeptide: Cytochrome c-type biogenesis protein CcmE (143 aa).

Topologically, residues 1–8 are cytoplasmic; sequence MTPVRRRK. Residues 9-29 traverse the membrane as a helical; Signal-anchor for type II membrane protein segment; sequence LFILLFALSVLSAAAALVLYA. Residues 30–143 lie on the Periplasmic side of the membrane; it reads LRQNISLFYT…KSALADKVKQ (114 aa). Heme-binding residues include histidine 124 and tyrosine 128.

The protein belongs to the CcmE/CycJ family.

The protein resides in the cell inner membrane. Heme chaperone required for the biogenesis of c-type cytochromes. Transiently binds heme delivered by CcmC and transfers the heme to apo-cytochromes in a process facilitated by CcmF and CcmH. The chain is Cytochrome c-type biogenesis protein CcmE from Legionella pneumophila (strain Lens).